The chain runs to 356 residues: Dual-specificity RNA methyltransferase RlmN (356 aa).

Glu-92 acts as the Proton acceptor in catalysis. Positions Glu-98–Arg-327 constitute a Radical SAM core domain. A disulfide bond links Cys-105 and Cys-337. Residues Cys-112, Cys-116, and Cys-119 each coordinate [4Fe-4S] cluster. S-adenosyl-L-methionine is bound by residues Gly-162–Glu-163, Ser-194, Ser-216–His-218, and Asn-294. Cys-337 acts as the S-methylcysteine intermediate in catalysis.

The protein belongs to the radical SAM superfamily. RlmN family. [4Fe-4S] cluster serves as cofactor.

Its subcellular location is the cytoplasm. It catalyses the reaction adenosine(2503) in 23S rRNA + 2 reduced [2Fe-2S]-[ferredoxin] + 2 S-adenosyl-L-methionine = 2-methyladenosine(2503) in 23S rRNA + 5'-deoxyadenosine + L-methionine + 2 oxidized [2Fe-2S]-[ferredoxin] + S-adenosyl-L-homocysteine. The enzyme catalyses adenosine(37) in tRNA + 2 reduced [2Fe-2S]-[ferredoxin] + 2 S-adenosyl-L-methionine = 2-methyladenosine(37) in tRNA + 5'-deoxyadenosine + L-methionine + 2 oxidized [2Fe-2S]-[ferredoxin] + S-adenosyl-L-homocysteine. In terms of biological role, specifically methylates position 2 of adenine 2503 in 23S rRNA and position 2 of adenine 37 in tRNAs. m2A2503 modification seems to play a crucial role in the proofreading step occurring at the peptidyl transferase center and thus would serve to optimize ribosomal fidelity. The sequence is that of Dual-specificity RNA methyltransferase RlmN from Ruthia magnifica subsp. Calyptogena magnifica.